The sequence spans 555 residues: Potassium-transporting ATPase potassium-binding subunit (555 aa).

10 helical membrane-spanning segments follow: residues 2-22 (IWVA…PTGI), 60-80 (QYAL…YFIF), 130-150 (IGIT…VMAF), 173-193 (VFLP…VPQT), 246-266 (MSNI…PFTY), 278-298 (ILFV…TTSE), 374-394 (AGFV…GLMV), 412-432 (LIAV…ALAL), 483-503 (LVMF…AASL), and 525-545 (GIFI…MLVL).

This sequence belongs to the KdpA family. In terms of assembly, the system is composed of three essential subunits: KdpA, KdpB and KdpC.

The protein localises to the cell membrane. Its function is as follows. Part of the high-affinity ATP-driven potassium transport (or Kdp) system, which catalyzes the hydrolysis of ATP coupled with the electrogenic transport of potassium into the cytoplasm. This subunit binds the extracellular potassium ions and delivers the ions to the membrane domain of KdpB through an intramembrane tunnel. The sequence is that of Potassium-transporting ATPase potassium-binding subunit from Bacillus cereus (strain ZK / E33L).